The chain runs to 348 residues: Dihydroorotase (348 aa).

Zn(2+)-binding residues include histidine 14 and histidine 16. Substrate contacts are provided by residues 16-18 (HLR) and asparagine 42. The Zn(2+) site is built by lysine 100, histidine 137, and histidine 175. Residue lysine 100 is modified to N6-carboxylysine. Histidine 137 lines the substrate pocket. Residue leucine 220 participates in substrate binding. Residue aspartate 248 coordinates Zn(2+). Aspartate 248 is an active-site residue. Positions 252 and 264 each coordinate substrate.

It belongs to the metallo-dependent hydrolases superfamily. DHOase family. Class II DHOase subfamily. Homodimer. It depends on Zn(2+) as a cofactor.

The enzyme catalyses (S)-dihydroorotate + H2O = N-carbamoyl-L-aspartate + H(+). It participates in pyrimidine metabolism; UMP biosynthesis via de novo pathway; (S)-dihydroorotate from bicarbonate: step 3/3. Functionally, catalyzes the reversible cyclization of carbamoyl aspartate to dihydroorotate. The sequence is that of Dihydroorotase from Pseudomonas entomophila (strain L48).